A 98-amino-acid polypeptide reads, in one-letter code: NADH-ubiquinone oxidoreductase chain 4L (98 aa).

3 consecutive transmembrane segments (helical) span residues 1–21 (MSLTYMNMFMAFMISLLGLLM), 29–49 (SLLCLEGMMLSLFVMMTVIIL), and 61–81 (IILLVFAACEAALGLSLLVMV).

It belongs to the complex I subunit 4L family. Core subunit of respiratory chain NADH dehydrogenase (Complex I) which is composed of 45 different subunits.

It is found in the mitochondrion inner membrane. It carries out the reaction a ubiquinone + NADH + 5 H(+)(in) = a ubiquinol + NAD(+) + 4 H(+)(out). Core subunit of the mitochondrial membrane respiratory chain NADH dehydrogenase (Complex I) which catalyzes electron transfer from NADH through the respiratory chain, using ubiquinone as an electron acceptor. Part of the enzyme membrane arm which is embedded in the lipid bilayer and involved in proton translocation. This chain is NADH-ubiquinone oxidoreductase chain 4L (MT-ND4L), found in Uroderma bilobatum (Tent-making bat).